We begin with the raw amino-acid sequence, 397 residues long: Cystinosin (397 aa).

An N-terminal signal peptide occupies residues 1–24 (MDFSTHRLTTLLLLLLATVALGNA). Topologically, residues 25-126 (QSSQLTVDSH…FVRVTVAKSR (102 aa)) are lumenal. N-linked (GlcNAc...) asparagine glycosylation is found at Asn-43 and Asn-86. A helical transmembrane segment spans residues 127-147 (ALIYTSIIFGWVYFVAWSVSF). The PQ-loop 1 domain maps to 132–187 (SIIFGWVYFVAWSVSFYPQIWSNYRRKSVEGLNFDFLALNIVGFTLYSMFNCGLYF). The Cytoplasmic segment spans residues 148 to 167 (YPQIWSNYRRKSVEGLNFDF). Residues 168–188 (LALNIVGFTLYSMFNCGLYFI) traverse the membrane as a helical segment. At 189 to 210 (EDLQNEYEVRYPLGVNPVMLND) the chain is on the lumenal side. Residues 211-231 (VVFSLHAMFATCITILQCFFY) form a helical membrane-spanning segment. Residues 232–239 (QRAQQRVS) lie on the Cytoplasmic side of the membrane. The helical transmembrane segment at 240–260 (FIAYGILAIFAVVVVVSAGLA) threads the bilayer. The Lumenal segment spans residues 261–263 (GGS). A helical membrane pass occupies residues 264–284 (VIHWLDFLYYCSYVKLTITII). Residues 271–327 (LYYCSYVKLTITIIKYVPQALMNYRRKSTSGWSIGNILLDFTGGTLSMLQMILNAHN) enclose the PQ-loop 2 domain. The Cytoplasmic portion of the chain corresponds to 285 to 302 (KYVPQALMNYRRKSTSGW). Residues 303 to 323 (SIGNILLDFTGGTLSMLQMIL) form a helical membrane-spanning segment. Residues 324–340 (NAHNYDDWVSIFGDPTK) are Lumenal-facing. Residues 341–361 (FGLGLFSVLFDVFFMLQHYVF) traverse the membrane as a helical segment. Over 362–397 (YRHSRESSSSDLTTVTDVQNRTNESPPPSEVTTEKY) the chain is Cytoplasmic. Residues 373 to 385 (LTTVTDVQNRTNE) show a composition bias toward polar residues. The segment at 373–397 (LTTVTDVQNRTNESPPPSEVTTEKY) is disordered.

It belongs to the cystinosin family.

Its subcellular location is the lysosome membrane. The enzyme catalyses L-cystine(out) + H(+)(out) = L-cystine(in) + H(+)(in). Cystine/H(+) symporter that mediates export of cystine, the oxidized dimer of cysteine, from lysosomes. Involved in cysteine homeostasis during periods of fasting, which indirectly regulates mTORC1-mediated signaling by supporting de novo CoA synthesis, the TCA cycle and amino acid metabolism during periods of food shortage. Important for maintaining autophagy, and for development and survival during periods of fasting. This Drosophila melanogaster (Fruit fly) protein is Cystinosin.